Consider the following 142-residue polypeptide: Ig heavy chain V region IR2 (142 aa).

Positions 1 to 19 (MDLRLTYVFIVAILKGVLC) are cleaved as a signal peptide. The Ig-like domain maps to 20 to 133 (EVKLEESGGG…YSENWFVYWG (114 aa)).

The chain is Ig heavy chain V region IR2 from Rattus norvegicus (Rat).